A 1199-amino-acid chain; its full sequence is DNA-directed RNA polymerase subunit beta' (1199 aa).

Residues C60, C62, C75, and C78 each contribute to the Zn(2+) site. Mg(2+) is bound by residues D449, D451, and D453. Zn(2+)-binding residues include C818, C892, C899, and C902.

This sequence belongs to the RNA polymerase beta' chain family. The RNAP catalytic core consists of 2 alpha, 1 beta, 1 beta' and 1 omega subunit. When a sigma factor is associated with the core the holoenzyme is formed, which can initiate transcription. Mg(2+) is required as a cofactor. The cofactor is Zn(2+).

It catalyses the reaction RNA(n) + a ribonucleoside 5'-triphosphate = RNA(n+1) + diphosphate. Its function is as follows. DNA-dependent RNA polymerase catalyzes the transcription of DNA into RNA using the four ribonucleoside triphosphates as substrates. The chain is DNA-directed RNA polymerase subunit beta' from Exiguobacterium sibiricum (strain DSM 17290 / CCUG 55495 / CIP 109462 / JCM 13490 / 255-15).